The primary structure comprises 433 residues: 26S proteasome regulatory subunit 7 (433 aa).

A disordered region spans residues Met-1–Ile-22. A compositionally biased stretch (basic and acidic residues) spans Asp-8 to Ile-22. At Lys-116 the chain carries N6-acetyllysine. Gly-216–Thr-223 provides a ligand contact to ATP. N6-acetyllysine is present on Lys-422.

It belongs to the AAA ATPase family. Component of the 19S proteasome regulatory particle complex. The 26S proteasome consists of a 20S core particle (CP) and two 19S regulatory subunits (RP). The regulatory particle is made of a lid composed of 9 subunits, a base containing 6 ATPases including PSMC2 and few additional components. Interacts with NDC80 and SQSTM1. Interacts with PAAF1. Interacts with TRIM5. Post-translationally, monoubiquitinated by RNF181. In terms of processing, phosphorylated. Dephosphorylated by UBLCP1 which impairs PSMC2 ATPase activity and disrupts 26S proteasome assembly.

The protein resides in the cytoplasm. Component of the 26S proteasome, a multiprotein complex involved in the ATP-dependent degradation of ubiquitinated proteins. This complex plays a key role in the maintenance of protein homeostasis by removing misfolded or damaged proteins, which could impair cellular functions, and by removing proteins whose functions are no longer required. Therefore, the proteasome participates in numerous cellular processes, including cell cycle progression, apoptosis, or DNA damage repair. PSMC2 belongs to the heterohexameric ring of AAA (ATPases associated with diverse cellular activities) proteins that unfolds ubiquitinated target proteins that are concurrently translocated into a proteolytic chamber and degraded into peptides. The protein is 26S proteasome regulatory subunit 7 (Psmc2) of Rattus norvegicus (Rat).